The chain runs to 119 residues: MGKAAAVVLVTLVALLGLAQADLTPKVQVYSRFPASAGTKNVLNCFAAGFHPPKISITLMKDGVPMEGAQYSDMSFNDDWTFQRLVHADFTPSSGSTYACKVEHETLKEPQVYKWDPEF.

The signal sequence occupies residues 1 to 21 (MGKAAAVVLVTLVALLGLAQA). Positions 25–113 (PKVQVYSRFP…HETLKEPQVY (89 aa)) constitute an Ig-like C1-type domain. Cys-45 and Cys-100 form a disulfide bridge.

The protein belongs to the beta-2-microglobulin family. In terms of assembly, heterodimer of an alpha chain and a beta chain. Beta-2-microglobulin is the beta-chain of major histocompatibility complex class I molecules.

It localises to the secreted. Functionally, component of the class I major histocompatibility complex (MHC). Involved in the presentation of peptide antigens to the immune system. This chain is Beta-2-microglobulin (B2M), found in Gallus gallus (Chicken).